Reading from the N-terminus, the 542-residue chain is Chaperonin GroEL 2 (542 aa).

Residues Thr-30–Pro-33, Lys-51, Asp-87–Thr-91, Gly-415, and Asp-496 each bind ATP.

This sequence belongs to the chaperonin (HSP60) family. In terms of assembly, forms a cylinder of 14 subunits composed of two heptameric rings stacked back-to-back. Interacts with the co-chaperonin GroES.

The protein localises to the cytoplasm. The catalysed reaction is ATP + H2O + a folded polypeptide = ADP + phosphate + an unfolded polypeptide.. Together with its co-chaperonin GroES, plays an essential role in assisting protein folding. The GroEL-GroES system forms a nano-cage that allows encapsulation of the non-native substrate proteins and provides a physical environment optimized to promote and accelerate protein folding. The sequence is that of Chaperonin GroEL 2 from Rhizobium etli (strain ATCC 51251 / DSM 11541 / JCM 21823 / NBRC 15573 / CFN 42).